The following is a 130-amino-acid chain: Small ribosomal subunit protein uS11c (130 aa).

Belongs to the universal ribosomal protein uS11 family. Part of the 30S ribosomal subunit.

The protein resides in the plastid. Its subcellular location is the chloroplast. In Tetradesmus obliquus (Green alga), this protein is Small ribosomal subunit protein uS11c.